The primary structure comprises 156 residues: Endogenous retrovirus group K member 21 Pro protein (156 aa).

Residues 21–96 form the Peptidase A2 domain; sequence FEGLVDTGAD…IPLNLWGRDL (76 aa). The active site involves Asp-26. Residues 111–156 enclose the G-patch domain; sequence YSPTSQKIMTKMGYIPGKGLGKNEDGIKVPVEAKINQKREGIGYPF.

This sequence belongs to the peptidase A2 family. HERV class-II K(HML-2) subfamily. In terms of assembly, active as a homodimer. In terms of processing, autoproteolytically processed at the N-terminus. Expected C-terminal autoprocessing not detected. The sequence shown is that of the processed Pro protein.

It carries out the reaction Processing at the authentic HIV-1 PR recognition site and release of the mature p17 matrix and the p24 capsid protein, as a result of the cleavage of the -SQNY-|-PIVQ- cleavage site.. In terms of biological role, retroviral proteases have roles in the processing of the primary translation products and the maturation of the viral particle. Endogenous Pro proteins may have kept, lost or modified their original function during evolution. The chain is Endogenous retrovirus group K member 21 Pro protein (ERVK-21) from Homo sapiens (Human).